The primary structure comprises 522 residues: AAA ATPase forming ring-shaped complexes (522 aa).

The segment at 1–26 (MGQEKHTDAASQSRDPEAVAAHENDQ) is disordered. Residues 20–57 (AAHENDQLRQRNHALAKALTRATEELRKAKAQLEQFMA) are a coiled coil. ATP is bound at residue 248-253 (GNGKTL).

Belongs to the AAA ATPase family. As to quaternary structure, homohexamer. Assembles into a hexameric ring structure.

The chain is AAA ATPase forming ring-shaped complexes from Bifidobacterium animalis subsp. lactis (strain AD011).